The chain runs to 213 residues: Large ribosomal subunit protein uL1 (213 aa).

Belongs to the universal ribosomal protein uL1 family. Part of the 50S ribosomal subunit.

In terms of biological role, binds directly to 23S rRNA. Probably involved in E site tRNA release. Functionally, protein L1 is also a translational repressor protein, it controls the translation of its operon by binding to its mRNA. This chain is Large ribosomal subunit protein uL1, found in Methanosarcina mazei (strain ATCC BAA-159 / DSM 3647 / Goe1 / Go1 / JCM 11833 / OCM 88) (Methanosarcina frisia).